Reading from the N-terminus, the 375-residue chain is Actin, cytoplasmic (375 aa).

Belongs to the actin family.

It localises to the cytoplasm. The protein localises to the cytoskeleton. The catalysed reaction is ATP + H2O = ADP + phosphate + H(+). Actins are highly conserved proteins that are involved in various types of cell motility and are ubiquitously expressed in all eukaryotic cells. The chain is Actin, cytoplasmic from Sterkiella nova (Ciliate).